Consider the following 242-residue polypeptide: ATP synthase subunit a (242 aa).

Transmembrane regions (helical) follow at residues 29 to 49, 84 to 104, 114 to 134, 140 to 160, 189 to 209, and 210 to 230; these read SAAYMLLASVLALTYFYLAFS, FVPVIFTLFVFILFCNLFGMI, IIITFALAILVFLMVTIVGFV, FLSLFLPHGTPLWLAPLMIII, VIASFVVTLMIYLKFLPIPLM, and VILIGFEIFVAILQAYIFTIL.

It belongs to the ATPase A chain family. In terms of assembly, F-type ATPases have 2 components, CF(1) - the catalytic core - and CF(0) - the membrane proton channel. CF(1) has five subunits: alpha(3), beta(3), gamma(1), delta(1), epsilon(1). CF(0) has three main subunits: a(1), b(2) and c(9-12). The alpha and beta chains form an alternating ring which encloses part of the gamma chain. CF(1) is attached to CF(0) by a central stalk formed by the gamma and epsilon chains, while a peripheral stalk is formed by the delta and b chains.

The protein localises to the cell inner membrane. Key component of the proton channel; it plays a direct role in the translocation of protons across the membrane. The polypeptide is ATP synthase subunit a (Rickettsia bellii (strain RML369-C)).